The following is a 400-amino-acid chain: NAD-dependent protein deacetylase sirtuin-7 (400 aa).

The disordered stretch occupies residues 1-27; it reads MAAGGLSRSERKAAERVRRLREEQQRE. The segment covering 8–27 has biased composition (basic and acidic residues); sequence RSERKAAERVRRLREEQQRE. The 248-residue stretch at 82 to 329 folds into the Deacetylase sirtuin-type domain; that stretch reads PEELRGKVRE…RLLMAELGLE (248 aa). Residues 107-126 and 167-170 contribute to the NAD(+) site; these read GAGI…NGVW and QNCD. Residue His187 is the Proton acceptor of the active site. Zn(2+) is bound by residues Cys195, Cys198, Cys225, and Cys228. Residues 268 to 270, 297 to 299, and Cys315 contribute to the NAD(+) site; these read GSS and NLQ. The tract at residues 354–380 is disordered; the sequence is SHSRKSLCRSREEAPPGDRGAPLSSAP. Asymmetric dimethylarginine; alternate is present on Arg388. Residue Arg388 is modified to Omega-N-methylarginine; alternate.

It belongs to the sirtuin family. Class IV subfamily. As to quaternary structure, interacts with UBTF and the RNA polymerase I complex. Interacts with components of the B-WICH complex, such as MYBBP1A, SMARCA5/SNF2H and BAZ1B/WSTF. Interacts with ELK4, leading to stabilization at target promoters for H3K18Ac deacetylation. Interacts with histone H2A and/or histone H2B. Interacts with DNMT1. Interacts with SIRT1. Requires Zn(2+) as cofactor. In terms of processing, phosphorylated during mitosis. Methylation at Arg-388 by PRMT6 inhibits the H3K18Ac histone deacetylase activity, promoting mitochondria biogenesis and maintaining mitochondria respiration. Post-translationally, ubiquitinated via 'Lys-63'-linked ubiquitin chains. Deubiquitinated by USP7, inhibiting the H3K18Ac histone deacetylase activity and regulating gluconeogenesis. Ubiquitinated by E3 ubiquitin-protein ligase complex containing FBXO7; leading to proteasomal degradation.

Its subcellular location is the nucleus. The protein localises to the nucleolus. It localises to the nucleoplasm. The protein resides in the chromosome. It is found in the cytoplasm. The enzyme catalyses N(6)-acetyl-L-lysyl-[protein] + NAD(+) + H2O = 2''-O-acetyl-ADP-D-ribose + nicotinamide + L-lysyl-[protein]. It catalyses the reaction N(6)-glutaryl-L-lysyl-[protein] + NAD(+) + H2O = 2''-O-glutaryl-ADP-D-ribose + nicotinamide + L-lysyl-[protein]. It carries out the reaction N(6)-succinyl-L-lysyl-[protein] + NAD(+) + H2O = 2''-O-succinyl-ADP-D-ribose + nicotinamide + L-lysyl-[protein]. The catalysed reaction is N(6)-propanoyl-L-lysyl-[protein] + NAD(+) + H2O = 3''-O-propanoyl-ADP-D-ribose + nicotinamide + L-lysyl-[protein]. The enzyme catalyses N(6)-decanoyl-L-lysyl-[protein] + NAD(+) + H2O = 2''-O-decanoyl-ADP-D-ribose + nicotinamide + L-lysyl-[protein]. Its activity is regulated as follows. NAD-dependent protein-lysine deacetylase and deacylase activities are activated by nucleic acids. Histone deacetylase activity is activated by DNA and nucleosomes. Protein-lysine deacylase activity is activated by RNA. H3K18Ac histone deacetylase activity is inhibited by methylation at Arg-388. H3K18Ac histone deacetylase activity is inhibited by deubiquitination by USP7. NAD-dependent protein-lysine deacylase that can act both as a deacetylase or deacylase (desuccinylase, depropionylase, deglutarylase and dedecanoylase), depending on the context. Specifically mediates deacetylation of histone H3 at 'Lys-18' (H3K18Ac). In contrast to other histone deacetylases, displays strong preference for a specific histone mark, H3K18Ac, directly linked to control of gene expression. H3K18Ac is mainly present around the transcription start site of genes and has been linked to activation of nuclear hormone receptors; SIRT7 thereby acts as a transcription repressor. Moreover, H3K18 hypoacetylation has been reported as a marker of malignancy in various cancers and seems to maintain the transformed phenotype of cancer cells. Also able to mediate deacetylation of histone H3 at 'Lys-36' (H3K36Ac) in the context of nucleosomes. Also mediates deacetylation of non-histone proteins, such as ATM, CDK9, DDX21, DDB1, FBL, FKBP5/FKBP51, GABPB1, RAN, RRP9/U3-55K and POLR1E/PAF53. Enriched in nucleolus where it stimulates transcription activity of the RNA polymerase I complex. Acts by mediating the deacetylation of the RNA polymerase I subunit POLR1E/PAF53, thereby promoting the association of RNA polymerase I with the rDNA promoter region and coding region. In response to metabolic stress, SIRT7 is released from nucleoli leading to hyperacetylation of POLR1E/PAF53 and decreased RNA polymerase I transcription. Required to restore the transcription of ribosomal RNA (rRNA) at the exit from mitosis. Promotes pre-ribosomal RNA (pre-rRNA) cleavage at the 5'-terminal processing site by mediating deacetylation of RRP9/U3-55K, a core subunit of the U3 snoRNP complex. Mediates 'Lys-37' deacetylation of Ran, thereby regulating the nuclear export of NF-kappa-B subunit RELA/p65. Acts as a regulator of DNA damage repair by mediating deacetylation of ATM during the late stages of DNA damage response, promoting ATM dephosphorylation and deactivation. Suppresses the activity of the DCX (DDB1-CUL4-X-box) E3 ubiquitin-protein ligase complexes by mediating deacetylation of DDB1, which prevents the interaction between DDB1 and CUL4 (CUL4A or CUL4B). Activates RNA polymerase II transcription by mediating deacetylation of CDK9, thereby promoting 'Ser-2' phosphorylation of the C-terminal domain (CTD) of RNA polymerase II. Deacetylates FBL, promoting histone-glutamine methyltransferase activity of FBL. Acts as a regulator of mitochondrial function by catalyzing deacetylation of GABPB1. Regulates Akt/AKT1 activity by mediating deacetylation of FKBP5/FKBP51. Required to prevent R-loop-associated DNA damage and transcription-associated genomic instability by mediating deacetylation and subsequent activation of DDX21, thereby overcoming R-loop-mediated stalling of RNA polymerases. In addition to protein deacetylase activity, also acts as a protein-lysine deacylase. Acts as a protein depropionylase by mediating depropionylation of Osterix (SP7), thereby regulating bone formation by osteoblasts. Acts as a histone deglutarylase by mediating deglutarylation of histone H4 on 'Lys-91' (H4K91glu); a mark that destabilizes nucleosomes by promoting dissociation of the H2A-H2B dimers from nucleosomes. Acts as a histone desuccinylase: in response to DNA damage, recruited to DNA double-strand breaks (DSBs) and catalyzes desuccinylation of histone H3 on 'Lys-122' (H3K122succ), thereby promoting chromatin condensation and DSB repair. Also promotes DSB repair by promoting H3K18Ac deacetylation, regulating non-homologous end joining (NHEJ). Along with its role in DNA repair, required for chromosome synapsis during prophase I of female meiosis by catalyzing H3K18Ac deacetylation. Involved in transcriptional repression of LINE-1 retrotransposon via H3K18Ac deacetylation, and promotes their association with the nuclear lamina. Required to stabilize ribosomal DNA (rDNA) heterochromatin and prevent cellular senescence induced by rDNA instability. Acts as a negative regulator of SIRT1 by preventing autodeacetylation of SIRT1, restricting SIRT1 deacetylase activity. The polypeptide is NAD-dependent protein deacetylase sirtuin-7 (Homo sapiens (Human)).